The primary structure comprises 351 residues: Large ribosomal subunit protein uL3 (351 aa).

Disordered regions lie at residues 1–31 (MGHR…TPRT) and 246–271 (KGSR…GQLG).

The protein belongs to the universal ribosomal protein uL3 family. As to quaternary structure, part of the 50S ribosomal subunit. Forms a cluster with proteins L14 and L24e.

In terms of biological role, one of the primary rRNA binding proteins, it binds directly near the 3'-end of the 23S rRNA, where it nucleates assembly of the 50S subunit. This Saccharolobus islandicus (strain Y.N.15.51 / Yellowstone #2) (Sulfolobus islandicus) protein is Large ribosomal subunit protein uL3.